Consider the following 122-residue polypeptide: Small ribosomal subunit protein uS13 (122 aa).

The tract at residues 93-122 (RRGLPVRGQKTKTNARTRKGPKKTIANKKK) is disordered.

Belongs to the universal ribosomal protein uS13 family. In terms of assembly, part of the 30S ribosomal subunit. Forms a loose heterodimer with protein S19. Forms two bridges to the 50S subunit in the 70S ribosome.

Its function is as follows. Located at the top of the head of the 30S subunit, it contacts several helices of the 16S rRNA. In the 70S ribosome it contacts the 23S rRNA (bridge B1a) and protein L5 of the 50S subunit (bridge B1b), connecting the 2 subunits; these bridges are implicated in subunit movement. Contacts the tRNAs in the A and P-sites. The sequence is that of Small ribosomal subunit protein uS13 from Clostridium beijerinckii (strain ATCC 51743 / NCIMB 8052) (Clostridium acetobutylicum).